Consider the following 310-residue polypeptide: Quinolinate synthase 2 (310 aa).

Iminosuccinate contacts are provided by histidine 30 and serine 47. Cysteine 92 lines the [4Fe-4S] cluster pocket. Iminosuccinate-binding positions include 118–120 and serine 135; that span reads YVN. Residue cysteine 177 participates in [4Fe-4S] cluster binding. Iminosuccinate contacts are provided by residues 203–205 and threonine 220; that span reads HPE. Cysteine 265 lines the [4Fe-4S] cluster pocket.

This sequence belongs to the quinolinate synthase family. Type 2 subfamily. [4Fe-4S] cluster serves as cofactor.

The protein localises to the cytoplasm. It carries out the reaction iminosuccinate + dihydroxyacetone phosphate = quinolinate + phosphate + 2 H2O + H(+). It participates in cofactor biosynthesis; NAD(+) biosynthesis; quinolinate from iminoaspartate: step 1/1. Its function is as follows. Catalyzes the condensation of iminoaspartate with dihydroxyacetone phosphate to form quinolinate. This is Quinolinate synthase 2 from Methanosarcina acetivorans (strain ATCC 35395 / DSM 2834 / JCM 12185 / C2A).